The primary structure comprises 371 residues: Protein RecA (371 aa).

Residue 75–82 participates in ATP binding; the sequence is GPESSGKT. The tract at residues 343 to 371 is disordered; the sequence is KAKDEPIADEDQPIDVVPNFDDQDVEPQN.

This sequence belongs to the RecA family.

The protein resides in the cytoplasm. Can catalyze the hydrolysis of ATP in the presence of single-stranded DNA, the ATP-dependent uptake of single-stranded DNA by duplex DNA, and the ATP-dependent hybridization of homologous single-stranded DNAs. It interacts with LexA causing its activation and leading to its autocatalytic cleavage. This Corynebacterium urealyticum (strain ATCC 43042 / DSM 7109) protein is Protein RecA.